We begin with the raw amino-acid sequence, 683 residues long: MALSKRELDELKPWIEKTVERVLGFSEPTVVTAALNCVGKGMDKKKAADHLKPFLDDSTLRFVDKLFEAVEEGRSSRHSKSSSDRSRKRDLKEVFGDDSEISKESSGVKKRRIPRFEEVEEEPEVIPGPPSESPGMLTKLQIKQMMEAATRQIEERKKQLSFISPPTPQPKTPSSSQPERLPIGNTIQPSQAATFMNDAIEKARKAAELQASIQAQLALKPGLIGNANMVGLANLHAMGIAPPKVELKDQTKPTPLILDEQGRTVDATGKEIELTHRMPTLKANIRAVKREQFKQQLKEKPSEDMESNTFFDPRVSIAPSQRQRRTFKFHDKGKFEKIAQRLRTKAQLEKLQAEISQAARKTGIHTSTRLALIAPKKELKEGDIPEIEWWDSYIIPNGFDLTEENPKREDYFGITNLVEHPAQLNPPVDNDTPVTLGVYLTKKEQKKLRRQTRREAQKELQEKVRLGLMPPPEPKVRISNLMRVLGTEAVQDPTKVEAHVRAQMAKRQKAHEEANAARKLTAEQRKVKKIKKLKEDISQGVHISVYRVRNLSNPAKKFKIEANAGQLYLTGVVVLHKDVNVVVVEGGPKAQKKFKRLMLHRIKWDEQTSNTKGDDDEESDEEAVKKTNKCVLVWEGTAKDRSFGEMKFKQCPTENMAREHFKKHGAEHYWDLALSESVLESTD.

A PWI domain is found at 1–87 (MALSKRELDE…HSKSSSDRSR (87 aa)). Residues 73-107 (GRSSRHSKSSSDRSRKRDLKEVFGDDSEISKESSG) show a composition bias toward basic and acidic residues. The tract at residues 73–135 (GRSSRHSKSS…IPGPPSESPG (63 aa)) is disordered. Residue Lys139 forms a Glycyl lysine isopeptide (Lys-Gly) (interchain with G-Cter in SUMO2) linkage. Positions 153 to 183 (IEERKKQLSFISPPTPQPKTPSSSQPERLPI) are disordered. Ser164 is subject to Phosphoserine. Position 167 is a phosphothreonine (Thr167). Glycyl lysine isopeptide (Lys-Gly) (interchain with G-Cter in SUMO2) cross-links involve residues Lys244 and Lys252. A mediates interaction with SART3 region spans residues 416–550 (NLVEHPAQLN…VHISVYRVRN (135 aa)). At Ser619 the chain carries Phosphoserine.

In terms of assembly, component of the precatalytic spliceosome (spliceosome B complex). Component of the U4/U6-U5 tri-snRNP complex, a building block of the precatalytic spliceosome (spliceosome B complex). The U4/U6-U5 tri-snRNP complex is composed of the U4, U6 and U5 snRNAs and at least PRPF3, PRPF4, PRPF6, PRPF8, PRPF31, SNRNP200, TXNL4A, SNRNP40, SNRPB, SNRPD1, SNRPD2, SNRPD3, SNRPE, SNRPF, SNRPG, DDX23, CD2BP2, PPIH, SNU13, EFTUD2, SART1 and USP39, plus LSM2, LSM3, LSM4, LSM5, LSM6, LSM7 and LSM8. Interacts directly with PRPF4. Part of a heteromeric complex containing PPIH, PRPF3 and PRPF4 that is stable in the absence of RNA. Interacts with SART3; the interaction is direct and recruits the deubiquitinase USP4 to PRPF3. Interacts with PRPF19. Interacts ('Lys-63'-linked polyubiquitinated) with PRPF8 (via the MPN (JAB/Mov34) domain); may stabilize the U4/U6-U5 tri-snRNP complex. Interacts with ERCC6. In terms of processing, ubiquitinated. Undergoes 'Lys-63'-linked polyubiquitination by PRPF19 and deubiquitination by USP4. 'Lys-63'-linked ubiquitination increases the affinity for PRPF8 and may regulate the assembly of the U4/U6-U5 tri-snRNP complex.

The protein localises to the nucleus. The protein resides in the nucleus speckle. Functionally, plays a role in pre-mRNA splicing as component of the U4/U6-U5 tri-snRNP complex that is involved in spliceosome assembly, and as component of the precatalytic spliceosome (spliceosome B complex). The protein is U4/U6 small nuclear ribonucleoprotein Prp3 (PRPF3) of Bos taurus (Bovine).